A 115-amino-acid chain; its full sequence is Aspartate 1-decarboxylase (115 aa).

Ser25 acts as the Schiff-base intermediate with substrate; via pyruvic acid in catalysis. Ser25 is modified (pyruvic acid (Ser)). Thr57 contacts substrate. Tyr58 acts as the Proton donor in catalysis. 73-75 (GAA) contributes to the substrate binding site.

It belongs to the PanD family. Heterooctamer of four alpha and four beta subunits. Pyruvate serves as cofactor. In terms of processing, is synthesized initially as an inactive proenzyme, which is activated by self-cleavage at a specific serine bond to produce a beta-subunit with a hydroxyl group at its C-terminus and an alpha-subunit with a pyruvoyl group at its N-terminus.

It is found in the cytoplasm. It catalyses the reaction L-aspartate + H(+) = beta-alanine + CO2. Its pathway is cofactor biosynthesis; (R)-pantothenate biosynthesis; beta-alanine from L-aspartate: step 1/1. In terms of biological role, catalyzes the pyruvoyl-dependent decarboxylation of aspartate to produce beta-alanine. The chain is Aspartate 1-decarboxylase from Kosmotoga olearia (strain ATCC BAA-1733 / DSM 21960 / TBF 19.5.1).